A 662-amino-acid chain; its full sequence is Histidine decarboxylase (662 aa).

The substrate site is built by tyrosine 88 and histidine 201. Lysine 312 is modified (N6-(pyridoxal phosphate)lysine). A disordered region spans residues 489 to 518 (QPSPRAKNVIPPPPGTRGLSLESVSEGGDD).

The protein belongs to the group II decarboxylase family. In terms of assembly, homodimer. Requires pyridoxal 5'-phosphate as cofactor.

It catalyses the reaction L-histidine + H(+) = histamine + CO2. Its pathway is amine and polyamine biosynthesis; histamine biosynthesis; histamine from L-histidine: step 1/1. Its function is as follows. Catalyzes the biosynthesis of histamine from histidine. The protein is Histidine decarboxylase (Hdc) of Mus musculus (Mouse).